A 105-amino-acid polypeptide reads, in one-letter code: Small ribosomal subunit protein uS17 (105 aa).

This sequence belongs to the universal ribosomal protein uS17 family. Part of the 30S ribosomal subunit. Contacts protein S12.

One of the primary rRNA binding proteins, it binds directly to 16S rRNA where it helps nucleate assembly of the platform and body of the 30S subunit by bringing together and stabilizing interactions between several different RNA helices. The combined cluster of proteins S8, S12 and S17 appears to hold together the shoulder and platform of the 30S subunit. This chain is Small ribosomal subunit protein uS17, found in Thermus thermophilus (strain ATCC 27634 / DSM 579 / HB8).